We begin with the raw amino-acid sequence, 397 residues long: Arginine biosynthesis bifunctional protein ArgJ (397 aa).

Positions 143, 169, 180, 266, 392, and 397 each coordinate substrate. Residue Thr180 is the Nucleophile of the active site.

The protein belongs to the ArgJ family. As to quaternary structure, heterotetramer of two alpha and two beta chains.

Its subcellular location is the cytoplasm. The catalysed reaction is N(2)-acetyl-L-ornithine + L-glutamate = N-acetyl-L-glutamate + L-ornithine. It carries out the reaction L-glutamate + acetyl-CoA = N-acetyl-L-glutamate + CoA + H(+). The protein operates within amino-acid biosynthesis; L-arginine biosynthesis; L-ornithine and N-acetyl-L-glutamate from L-glutamate and N(2)-acetyl-L-ornithine (cyclic): step 1/1. It functions in the pathway amino-acid biosynthesis; L-arginine biosynthesis; N(2)-acetyl-L-ornithine from L-glutamate: step 1/4. Its activity is regulated as follows. Competitively inhibited by L-ornithine. Functionally, catalyzes two activities which are involved in the cyclic version of arginine biosynthesis: the synthesis of N-acetylglutamate from glutamate and acetyl-CoA as the acetyl donor, and of ornithine by transacetylation between N(2)-acetylornithine and glutamate. In Thermotoga neapolitana (strain ATCC 49049 / DSM 4359 / NBRC 107923 / NS-E), this protein is Arginine biosynthesis bifunctional protein ArgJ.